The sequence spans 452 residues: MKLFGTSGIRMKNLTPEIAYKVGFAVSQIAKNVVVGRDTRTTGDLIRNSLFAGLLNGGAEIVDIGIVPTPTLGYSARNYDMGIMITASHNPSEYNGIKLFNKDGTSFRPEQEQNIEDIIYNKKNQKRVSWNSIKKVWTDESALKKYSDFILDSVEINKNFSVVVDCANSAGCVASPYLFTDVGAHVISVNGHIDGRFIGRSPEPNEKNLQDTMHMIKGLNENNKGNKYIGIAHDGDADRMIAIDEKGRLTDFDKLLAVFSRYMAEKTGTKTIITTVDASMAIEEYLKDLNVNVIRTKVGDVAVSDELNKHDDAIFGGEPSGTWIHKDIHLTPDGILSGLRLLEMMEFYDKKLYELIDDVPCYSNLREKLPCPDDKKIIVMDFVIKNGENIFDAEVETIDGARFSLDDGWVLIRPSGTEPFVRVRVEAKNDIIAKELLEKGIKLVKDGLNEKK.

The active-site Phosphoserine intermediate is the Ser88. Residues Ser88, Asp234, Asp236, and Asp238 each coordinate Mg(2+). Ser88 is modified (phosphoserine).

Belongs to the phosphohexose mutase family. It depends on Mg(2+) as a cofactor. In terms of processing, activated by phosphorylation.

The enzyme catalyses alpha-D-glucosamine 1-phosphate = D-glucosamine 6-phosphate. In terms of biological role, catalyzes the conversion of glucosamine-6-phosphate to glucosamine-1-phosphate. The protein is Phosphoglucosamine mutase of Methanococcus aeolicus (strain ATCC BAA-1280 / DSM 17508 / OCM 812 / Nankai-3).